The primary structure comprises 473 residues: MKTLYSLRRFYHVETPFNSNVGIAGRDIESTGFAWWSGNSRLINVSGKLLGAHVAHAGLMVFWCGAMTLFEVAHYIPEKPLYEQGLILLPHLATLGWGVGPGGEIIDVYPYFVVGVLHLISSAVLGFGGVYHSLIGPDTLEESFPAFGYDWRDKNKITTILGIHLVILGFGALLLVIKAIYVGGLYDTWAPGGGDVRIIDNPTLNPAVIFGYVLKSPWGGDGWIVSVNNMEDVVGGHIWIGFTCIAGGFWHILTKPFAWARRAYVWSGEAYLSYSLVAVSLMAFIASQYAWYNNTVYPSEFYGPTGPEASQSQAFTFLVRDQRLGASVSSAQGPTGLGKYLMRSPSGEIILGGETQRFWDLRAPWIEPLRGPNGLDLNKIKNDIQPWQERRAAEYMTHAPLGSLNSVGGVATEINSVNYVSPRSWLTTSHFFLGFAFYIGHLWHAGRARAAAAGFEKGINRENEPVLTLRPID.

Residues 1–14 (MKTLYSLRRFYHVE) constitute a propeptide that is removed on maturation. N-acetylthreonine is present on T15. T15 carries the post-translational modification Phosphothreonine. 5 helical membrane-spanning segments follow: residues 69–93 (LFEVAHYIPEKPLYEQGLILLPHLA), 134–155 (LIGPDTLEESFPAFGYDWRDKN), 178–200 (KAIYVGGLYDTWAPGGGDVRIID), 255–275 (KPFAWARRAYVWSGEAYLSYS), and 291–312 (WYNNTVYPSEFYGPTGPEASQS). E367 contacts [CaMn4O5] cluster. The chain crosses the membrane as a helical span at residues 447–471 (RARAAAAGFEKGINRENEPVLTLRP).

It belongs to the PsbB/PsbC family. PsbC subfamily. PSII is composed of 1 copy each of membrane proteins PsbA, PsbB, PsbC, PsbD, PsbE, PsbF, PsbH, PsbI, PsbJ, PsbK, PsbL, PsbM, PsbT, PsbX, PsbY, PsbZ, Psb30/Ycf12, at least 3 peripheral proteins of the oxygen-evolving complex and a large number of cofactors. It forms dimeric complexes. The cofactor is Binds multiple chlorophylls and provides some of the ligands for the Ca-4Mn-5O cluster of the oxygen-evolving complex. It may also provide a ligand for a Cl- that is required for oxygen evolution. PSII binds additional chlorophylls, carotenoids and specific lipids..

It localises to the plastid. Its subcellular location is the chloroplast thylakoid membrane. One of the components of the core complex of photosystem II (PSII). It binds chlorophyll and helps catalyze the primary light-induced photochemical processes of PSII. PSII is a light-driven water:plastoquinone oxidoreductase, using light energy to abstract electrons from H(2)O, generating O(2) and a proton gradient subsequently used for ATP formation. This chain is Photosystem II CP43 reaction center protein, found in Guillardia theta (Cryptophyte).